Consider the following 556-residue polypeptide: General transcription factor IIF subunit 1 (556 aa).

Disordered stretches follow at residues 82–128 (TMTS…PAAA) and 226–499 (SRLQ…PFTE). Positions 84–128 (TSAPNGTNSTGTTPNTTTTTTTTTTTTTTTTTAAGTPGAPNPAAA) are enriched in low complexity. Residues 245 to 275 (SGKKSIEELEEAEHRNRNEDPNRYKTTNEEK) show a composition bias toward basic and acidic residues. Acidic residues-rich tracts occupy residues 291-338 (GNGE…DVDL) and 378-394 (GDDEDDDEDDEDPDQDD). 2 stretches are compositionally biased toward basic and acidic residues: residues 415 to 427 (VKKEDDGGKDSKS) and 450 to 461 (NKSDSSVDNRES). The segment covering 469 to 492 (SSPQAVQPNSPSQQQQQQQQNIDP) has biased composition (low complexity).

Belongs to the TFIIF alpha subunit family. Heterodimer of an alpha and a beta subunit.

It is found in the nucleus. Functionally, TFIIF is a general transcription initiation factor that binds to RNA polymerase II and helps to recruit it to the initiation complex in collaboration with TFIIB. It promotes transcription elongation. The protein is General transcription factor IIF subunit 1 (gtf2f1) of Dictyostelium discoideum (Social amoeba).